A 357-amino-acid chain; its full sequence is Uroporphyrinogen decarboxylase (357 aa).

Substrate is bound by residues 30 to 34 (RQAGR), Asp79, Tyr154, Ser209, and His336.

Belongs to the uroporphyrinogen decarboxylase family. Homodimer.

It localises to the cytoplasm. The catalysed reaction is uroporphyrinogen III + 4 H(+) = coproporphyrinogen III + 4 CO2. Its pathway is porphyrin-containing compound metabolism; protoporphyrin-IX biosynthesis; coproporphyrinogen-III from 5-aminolevulinate: step 4/4. Functionally, catalyzes the decarboxylation of four acetate groups of uroporphyrinogen-III to yield coproporphyrinogen-III. The protein is Uroporphyrinogen decarboxylase of Mycobacterium leprae (strain Br4923).